The following is a 162-amino-acid chain: Austinoid biosynthesis clusters protein J (162 aa).

The protein belongs to the trt14 isomerase family. As to quaternary structure, homodimer.

It functions in the pathway secondary metabolite biosynthesis; terpenoid biosynthesis. Part of the gene cluster B that mediates the biosynthesis of austinol and dehydroaustinol, two fungal meroterpenoids. The first step of the pathway is the synthesis of 3,5-dimethylorsellinic acid by the polyketide synthase ausA. 3,5-dimethylorsellinic acid is then prenylated by the polyprenyl transferase ausN. Further epoxidation by the FAD-dependent monooxygenase ausM and cyclization by the probable terpene cyclase ausL lead to the formation of protoaustinoid A. Protoaustinoid A is then oxidized to spiro-lactone preaustinoid A3 by the combined action of the FAD-binding monooxygenases ausB and ausC, and the dioxygenase ausE. Acid-catalyzed keto-rearrangement and ring contraction of the tetraketide portion of preaustinoid A3 by ausJ lead to the formation of preaustinoid A4. The aldo-keto reductase ausK, with the help of ausH, is involved in the next step by transforming preaustinoid A4 into isoaustinone which is in turn hydroxylated by the P450 monooxygenase ausI to form austinolide. Finally, the cytochrome P450 monooxygenase ausG modifies austinolide to austinol. Austinol can be further modified to dehydroaustinol which forms a diffusible complex with diorcinol that initiates conidiation. Due to genetic rearrangements of the clusters and the subsequent loss of some enzymes, the end products of the Emericella nidulans austinoid biosynthesis clusters are austinol and dehydroaustinol, even if additional enzymes, such as the O-acetyltransferase ausQ and the cytochrome P450 monooxygenase ausR are still functional. This chain is Austinoid biosynthesis clusters protein J, found in Emericella nidulans (strain FGSC A4 / ATCC 38163 / CBS 112.46 / NRRL 194 / M139) (Aspergillus nidulans).